The primary structure comprises 2485 residues: MEKVHVDIEEDSPFLRALQRSFPQFEVEAKQVTDNDHANARAFSHLASKLIETEVDPSDTILDIGSAPARRMYSKHKYHCICPMRCAEDPDRLYKYATKLKKNCKEITDKELDKKMKELAAVMSDPDLETETMCLHDDESCRYEGQVAVYQDVYAVDGPTSLYHQANKGVRVAYWIGFDTTPFMFKNLAGAYPSYSTNWADETVLTARNIGLCSSDVMERSRRGMSILRKKYLKPSNNVLFSVGSTIYHEKRDLLRSWHLPSVFHLRGKQNYTCRCETIVSCDGYVVKRIAISPGLYGKPSGYAATMHREGFLCCKVTDTLNGERVSFPVCTYVPATLCDQMTGILATDVSADDAQKLLVGLNQRIVVNGRTQRNTNTMKNYLLPVVAQAFARWAKEYKEDQEDERPLGLRDRQLVMGCCWAFRRHKITSIYKRPDTQTIIKVNSDFHSFVLPRIGSNTLEIGLRTRIRKMLEEHKEPSPLITAEDIQEAKCAADEAKEVREAEELRAVLPPLAADVEEPTLEADVDLMLQEAGAGSVETPRGLIKVTSYAGEDKIGSYAVLSPQAVLKSEKLSCIHPLAEQVIVITHSGRKGRYAVEPYHGKVVVPEGHAIPVQDFQALSESATIVYNEREFVNRYLHHIATHGGALNTDEEYYKTVKPSEHDGEYLYDIDRKQCVKKELVTGLGLTGELVDPPFHEFAYESLRTRPAAPYQVPTIGVYGVPGSGKSGIIKSAVTKKDLVVSAKKENCAEIIRDVKRIKGLDVNARTVDSVLLNGCKYPVETLYIDEAFACHAGTLRALIAIIRPKKAVLCGDPKQCGFFNMMCLKVHFNHEICTQVFHKSISRRCTKSVTSVVSTLFYDKRMRTTNPKETKIEIDTTGSTKPKQDDLILTCFRGWVKQLQIDYKGNEVMTAAASQGLTRKGVYAVRYKVNENPLYAPTSEHVNVLLTRTEDRIVWKTLAGDPWIKTLTAKYPGNFTATIEEWQAEHDAIMRHILERPDPTDVFQNKANVCWAKALVPVLKTAGIDMTTEQWNTVDYFETDKAHSAEIVLNQLCVRFFGLDLDSGLFSAPTVPLSIRNNHWDNSPSPNMYGLNKEVVRQLSRRYPQLPRAVTTGRVYDMNTGTLRNYDPRINLVPVNRRLPHALVLHHNEHPQSDFSSFVSKLKGRTVLVVGEKLSVPGKTVDWLSDRPEATFRARLDLGIPGDVPKYDIIFINVRTPYKYHHYQQCEDHAIKLSMLTKKACLHLNPGGTCVSIGYGYADRASESIIGAIARQFKFSRVCKPKSSLEETEVLFVFIGYDRKARTHNPYKLSSTLTNIYTGSRLHEAGCAPSYHVVRGDIATATEGVIINAANSKGQPGGGVCGALYKKFPESFDLQPIEVGKARLVKGAAKHIIHAVGPNFNKVSEIEGDKQLAEAYESIAKIVNDNNYKSVAIPLLSTGIFSGNKDRLTQSLNHLLTALDTTDADVAIYCRDKKWEMTLKEAVARREAVEEICISDDSSVTEPDAELVRVHPKSSLAGRKGYSTSDGKTFSYLEGTKFHQAAKDIAEINAMWPVATEANEQVCMYILGESMSSIRSKCPVEESEASTPPSTLPCLCIHAMTPERVQRLKASRPEQITVCSSFPLPKYRITGVQKIQCSQPILFSPKVPAYIHPRKYLVETPTVEENQSTEGTPEQPTLITVGETRTRTPEPIIIEEEEDSISLLSDGPTHQVLQVEADIHGPPSASSSSWSIPHASDFDVDSLSILDTLEGASVTSEEASVETNSHFARSMEFLARPVPAPRTVFRNPPQPAPRTRTPSLAPSRASSRISLVSNPPGVNRVITREELEALTPSRAPSRSVSRTSLVSNPPGVNRVITREEFEAFVAQQQXRFDAGAYIFSSDTGQGHLQQKSVRQTVLSEVVLERTELEISYAPRLDQEKEELLRKKLQLNPTPANRSRYQSRRVENMKAITARRILQGLGHYLKAEGKVECYRTLHPVPLYSSSVNRAFSSPKVAVEACNAMLKENFPTVASYCIIPEYDAYLDMVDGASCCLDTASFCPAKLRSFPKKHSYLEPTIRSAVPSAIQNTLQNVLAAATKRNCNVTQMRELPVLDSAAFNVECFKKYACNNEYWETFKENPIRLTEENVVNYITKLKGPKAAALFAKTHNLNMLQDIPMDRFVMDLKRDVKVTPGTKHTEERPKVQVIQAADPLATAYLCGIHRELVRRLNAVLLPNIHTLFDMSAEDFDAIIAEHFQPGDCVLETDIASFDKSEDDAMALTALMILEDLGVDAELLTLIEAAFGEISSIHLPTKTKFKFGAMMKSGMFLTLFVNTVINIVIASRVLRERLTGSPCAAFIGDDNIVKGVKSDKLMADRCATWLNMEVKIIDAVVGEKAPYFCGGFILCDSVTGTACRVADPLKRLFKLGKPLAADDEHDDDRRRALHEESTRWNRVGILPELCKAVESRYETVGTSIIVMAMTTLASSVKSFSYLRGAPITLYG.

The Alphavirus-like MT domain occupies 28–259 (EAKQVTDNDH…EKRDLLRSWH (232 aa)). The tract at residues 244–263 (GSTIYHEKRDLLRSWHLPSV) is nsP1 membrane-binding. Cys419 carries S-palmitoyl cysteine; by host lipidation. Residues 690–841 (ELVDPPFHEF…HEICTQVFHK (152 aa)) enclose the (+)RNA virus helicase ATP-binding domain. A ribonucleoside 5'-triphosphate is bound at residue 721 to 728 (GVPGSGKS). Residues 842-990 (SISRRCTKSV…IEEWQAEHDA (149 aa)) enclose the (+)RNA virus helicase C-terminal domain. Residues 1003 to 1322 (DVFQNKANVC…STLTNIYTGS (320 aa)) form the Peptidase C9 domain. Residues 1004-1023 (VFQNKANVCWAKALVPVLKT) are nucleolus localization signal. The active-site For cysteine protease nsP2 activity is Cys1012. Residues 1056 to 1065 (VRFFGLDLDS) carry the Nuclear export signal motif. Residue His1081 is the For cysteine protease nsP2 activity of the active site. Positions 1179 to 1183 (PGKTV) match the Nuclear localization signal motif. Positions 1328–1489 (GCAPSYHVVR…TLKEAVARRE (162 aa)) constitute a Macro domain. ADP-D-ribose-binding residues include Asp1339, Asn1353, Gly1361, Gly1441, Ile1442, and Phe1443. Zn(2+) contacts are provided by Cys1596, Cys1598, Cys1621, and Cys1639. The disordered stretch occupies residues 1783-1810 (PRTVFRNPPQPAPRTRTPSLAPSRASSR). Over residues 1798–1810 (RTPSLAPSRASSR) the composition is skewed to polar residues. Tandem repeats lie at residues 1810–1831 (RISL…ELEA) and 1844–1865 (RTSL…EFEA). The interval 1810–1865 (RISLVSNPPGVNRVITREELEALTPSRAPSRSVSRTSLVSNPPGVNRVITREEFEA) is 2 X 21 AA approximate repeats, binding to host FXR family members. A RdRp catalytic domain is found at 2242 to 2357 (DCVLETDIAS…KGVKSDKLMA (116 aa)).

As to quaternary structure, interacts with non-structural protein 3. Interacts with RNA-directed RNA polymerase nsP4. Interacts with protease nsP2. interacts with itself. In terms of assembly, interacts with mRNA-capping enzyme nsP1. Interacts with host DDX1. Interacts with host DDX3. Interacts (via C-terminus) with host FXR1; this interaction inhibits the formation of host stress granules on viral mRNAs and the nsp3-FXR1 complexes bind viral RNAs and probably orchestrate the assembly of viral replication complexes. Interacts (via C-terminus) with host FXR2; this interaction inhibits the formation of host stress granules on viral mRNAs and the nsp3-FXR2 complexes bind viral RNAs and probably orchestrate the assembly of viral replication complexes. Interacts (via C-terminus) with host FMR1; this interaction inhibits the formation of host stress granules on viral mRNAs and the nsp3-FMR1 complexes bind viral RNAs and probably orchestrate the assembly of viral replication complexes. Interacts with mRNA-capping enzyme nsP1. Interacts with protease nsP2. interacts with itself. As to quaternary structure, interacts with RNA-directed RNA polymerase nsP4. Interacts with mRNA-capping enzyme nsP1. Interacts with KPNA1/karyopherin-alpha1; this interaction probably allows the active transport of protease nsP2 into the host nucleus. Requires Mg(2+) as cofactor. The cofactor is Mn(2+). In terms of processing, specific enzymatic cleavages in vivo yield mature proteins. The processing of the polyprotein is temporally regulated. In early stages (1.7 hpi), P1234 is first cleaved in trans through its nsP2 protease activity, releasing P123' and nsP4, which associate to form the early replication complex. At the same time, P1234 is also cut at the nsP1/nsP2 site early in infection but with lower efficiency. After replication of the viral minus-strand RNAs (4 hpi), the polyproteins are cut at the nsP1/nsP2 and nsP2/nsP3 sites very efficiently, preventing accumulation of P123' and P1234 and allowing the formation of the late replication complex. NsP3'/nsP4 site is not cleaved anymore and P34 is produced rather than nsP4. Specific enzymatic cleavages in vivo yield mature proteins. The processing of the polyprotein is temporally regulated. In early stages (1.7 hpi), P123 is cleaved at the nsP1/nsP2 site with low efficiency. After replication of the viral minus-strand RNAs (4 hpi), the polyproteins are cut at the nsP1/nsP2 and nsP2/nsP3 sites very efficiently, preventing accumulation of P123 and allowing the formation of the late replication complex. Post-translationally, specific enzymatic cleavages in vivo yield mature proteins. The processing of the polyprotein is temporally regulated. In early stages (1.7 hpi), P123' is cleaved at the nsP1/nsP2 site with low efficiency. After replication of the viral minus-strand RNAs (4 hpi), the polyproteins are cut at the nsP1/nsP2 and nsP2/nsP3 sites very efficiently, preventing accumulation of P123' and allowing the formation of the late replication complex. In terms of processing, palmitoylated by host palmitoyltransferases ZDHHC2 and ZDHHC19. Phosphorylated by host on serines and threonines. Post-translationally, ubiquitinated; targets the protein for rapid degradation via the ubiquitin system. Nsp4 is present in extremely low quantities due to low frequency of translation through the amber stop-codon and the degradation by the ubiquitin pathway.

Its subcellular location is the host cytoplasmic vesicle membrane. It localises to the host cell membrane. The protein resides in the host cell projection. It is found in the host filopodium. The protein localises to the host nucleus. Its subcellular location is the host cytoplasm. It catalyses the reaction GTP + S-adenosyl-L-methionine = N(7)-methyl-GTP + S-adenosyl-L-homocysteine. It carries out the reaction N(7)-methyl-GTP + L-histidyl-[protein] = N(tele)-(N(7)-methylguanosine 5'-phospho)-L-histidyl-[protein] + diphosphate. The enzyme catalyses N(tele)-(N(7)-methylguanosine 5'-phospho)-L-histidyl-[protein] + a 5'-end diphospho-(purine-ribonucleoside) in mRNA + H(+) = a 5'-end (N(7)-methyl 5'-triphosphoguanosine)-(purine-ribonucleoside) in mRNA + L-histidyl-[protein]. The catalysed reaction is a 5'-end triphospho-ribonucleoside in mRNA + H2O = a 5'-end diphospho-ribonucleoside in mRNA + phosphate + H(+). It catalyses the reaction a ribonucleoside 5'-triphosphate + H2O = a ribonucleoside 5'-diphosphate + phosphate + H(+). It carries out the reaction ATP + H2O = ADP + phosphate + H(+). The enzyme catalyses RNA(n) + a ribonucleoside 5'-triphosphate = RNA(n+1) + diphosphate. The catalysed reaction is 4-O-(ADP-D-ribosyl)-L-aspartyl-[protein] + H2O = L-aspartyl-[protein] + ADP-D-ribose + H(+). It catalyses the reaction 5-O-(ADP-D-ribosyl)-L-glutamyl-[protein] + H2O = L-glutamyl-[protein] + ADP-D-ribose + H(+). It carries out the reaction RNA(n) + ATP = RNA(n)-3'-adenine ribonucleotide + diphosphate. The enzyme catalyses ADP-alpha-D-ribose 1''-phosphate + H2O = ADP-D-ribose + phosphate. Inhibited by sinefungin. Functionally, inactive precursor of the viral replicase, which is activated by cleavages carried out by the viral protease nsP2. In terms of biological role, the early replication complex formed by the polyprotein P123 and nsP4 synthesizes the minus-strand RNAs (antigenome). Polyprotein P123 is a short-lived polyprotein that accumulates during early stage of infection. As soon P123 is cleaved into mature proteins, the plus-strand RNAs synthesis begins. Its function is as follows. The early replication complex formed by the polyprotein P123' and nsP4 synthesizes minus-strand RNAs (antigenome). Polyprotein P123' is a short-lived polyprotein that accumulates during early stage of infection. As soon P123' is cleaved into mature proteins, the plus-strand RNAs synthesis begins. Cytoplasmic capping enzyme that catalyzes two virus-specific reactions: methyltransferase and nsP1 guanylyltransferase. mRNA-capping is necessary since all viral RNAs are synthesized in the cytoplasm, and host capping enzymes are restricted to the nucleus. The enzymatic reaction involves a covalent link between 7-methyl-GMP and nsP1, whereas eukaryotic capping enzymes form a covalent complex only with GMP. NsP1 capping consists in the following reactions: GTP is first methylated into 7-methyl-GMP and then is covalently linked to nsP1 to form the m7GMp-nsP1 complex from which 7-methyl-GMP complex is transferred to the mRNA to create the cap structure. NsP1 is also needed for the initiation of the minus-strand RNAs synthesis. Probably serves as a membrane anchor for the replication complex composed of nsP1-nsP4. Nsp1 is needed for the initiation of the minus-strand RNAs synthesis. Palmitoylated nsP1 is remodeling host cell cytoskeleton, and induces filopodium-like structure formation at the surface of the host cell. Functionally, multifunctional protein whose N-terminus is part of the RNA polymerase complex and displays NTPase, RNA triphosphatase and helicase activities. NTPase and RNA triphosphatase are involved in viral RNA capping and helicase keeps a check on the dsRNA replication intermediates. The C-terminus harbors a protease that specifically cleaves the polyproteins and releases the mature proteins. Required for the shutoff of minus-strand RNAs synthesis. Inhibits host translation to ensure maximal viral gene expression and evade host immune response. In terms of biological role, seems to be essential for minus-strand RNAs and subgenomic 26S mRNAs synthesis. Displays mono-ADP-ribosylhydrolase activity. ADP-ribosylation is a post-translational modification that controls various processes of the host cell and the virus probably needs to revert it for optimal viral replication. Binds proteins of FXR family and sequesters them into the viral RNA replication complexes thereby inhibiting the formation of host stress granules on viral mRNAs. The nsp3-FXR complexes bind viral RNAs and probably orchestrate the assembly of viral replication complexes, thanks to the ability of FXR family members to self-assemble and bind DNA. Its function is as follows. Seems to be essential for minus-strand RNAs and subgenomic 26S mRNAs synthesis. Displays mono-ADP-ribosylhydrolase activity. ADP-ribosylation is a post-translational modification that controls various processes of the host cell and the virus probably needs to revert it for optimal viral replication. Binds proteins of FXR family and sequesters them into the viral RNA replication complexes thereby inhibiting the formation of host stress granules on viral mRNAs. The nsp3'-FXR complexes bind viral RNAs and probably orchestrate the assembly of viral replication complexes, thanks to the ability of FXR family members to self-assemble and bind DNA. RNA dependent RNA polymerase. Replicates genomic and antigenomic RNA by recognizing replications specific signals. The early replication complex formed by the polyprotein P123 and nsP4 synthesizes minus-strand RNAs. The late replication complex composed of fully processed nsP1-nsP4 is responsible for the production of genomic and subgenomic plus-strand RNAs. The chain is Polyprotein P1234 from Venezuelan equine encephalitis virus (strain 3880) (VEEV).